A 57-amino-acid polypeptide reads, in one-letter code: Three-finger toxin Tschuditoxin-I (57 aa).

Disulfide bonds link Cys-3/Cys-22, Cys-17/Cys-39, and Cys-41/Cys-52.

In terms of tissue distribution, expressed by the venom gland.

It is found in the secreted. In terms of biological role, produces peripheral paralysis by blocking neuromuscular transmission at the postsynaptic site. Binds to and inhibits the endogenous nicotinic acetylcholine receptors (nAChR). This neurotoxin is lethal to mice by intraperitoneal or intravenous injection. The protein is Three-finger toxin Tschuditoxin-I of Micrurus tschudii (Desert coral snake).